The sequence spans 746 residues: Histone-lysine N-methyltransferase EZH2 (746 aa).

The tract at residues 1-340 (MGQTGKKSEK…AKEFAAALTA (340 aa)) is interaction with DNMT1, DNMT3A and DNMT3B. A Phosphoserine; by PKB/AKT1 modification is found at serine 21. The interval 39–68 (KSMFSSNRQKILERTEILNQEWKQRRIQPV) is interaction with EED. O-linked (GlcNAc) serine glycosylation is present at serine 75. Serine 76 is subject to Phosphoserine. Positions 180-222 (QYNDDDDDDDGDDPEEREEKQKDLEDHRDDKESRPPRKFPSDK) are disordered. The span at 182–195 (NDDDDDDDGDDPEE) shows a compositional bias: acidic residues. Residues 196-222 (REEKQKDLEDHRDDKESRPPRKFPSDK) show a composition bias toward basic and acidic residues. The segment at 329–522 (EGAKEFAAAL…SSNHVYNYQP (194 aa)) is interaction with CDYL. A Phosphothreonine modification is found at threonine 339. The disordered stretch occupies residues 340–426 (AERIKTPPKR…PIKMKPNIEP (87 aa)). Threonine 345 carries the post-translational modification Phosphothreonine; by CDK1 and CDK2. Residues 345-357 (TPPKRPGGRRRGR) show a composition bias toward basic residues. Residues serine 363 and serine 366 each carry the phosphoserine modification. A Phosphothreonine modification is found at threonine 367. Basic and acidic residues predominate over residues 374–385 (ESKDTDSDREAG). At threonine 487 the chain carries Phosphothreonine. The CXC domain occupies 503-605 (CRKIQLKKDG…SKNVSCKNCS (103 aa)). In terms of domain architecture, SET spans 612–727 (KHLLLAPSDV…TGEELFFDYR (116 aa)). Residue lysine 634 forms a Glycyl lysine isopeptide (Lys-Gly) (interchain with G-Cter in SUMO2) linkage.

It belongs to the class V-like SAM-binding methyltransferase superfamily. Histone-lysine methyltransferase family. EZ subfamily. As to quaternary structure, component of the PRC2/EED-EZH2 complex, which includes EED, EZH2, SUZ12, RBBP4 and RBBP7 and possibly AEBP2. The minimum components required for methyltransferase activity of the PRC2/EED-EZH2 complex are EED, EZH2 and SUZ12. The PRC2 complex may also interact with DNMT1, DNMT3A, DNMT3B and PHF1 via the EZH2 subunit and with SIRT1 via the SUZ12 subunit. Interacts with HDAC1 and HDAC2. Binds ATRX via the SET domain. Interacts with PRAME. Interacts with CDYL. Interacts with BMAL1, CLOCK and CRY1. Interacts with DNMT3L; the interaction is direct. Interacts with EZHIP; the interaction blocks EZH2 methyltransferase activity. Interacts with ZNF263; recruited to the SIX3 promoter along with other proteins involved in chromatin modification and transcriptional corepression where it contributes to transcriptional repression. Interacts with ARMC12. Interacts with ZMYND8; the interaction is dependent on the presence of chromatin. Interacts with DDX18; this interaction inhibits the PRC2 complex. Post-translationally, phosphorylated by AKT1. Phosphorylation by AKT1 reduces methyltransferase activity. Phosphorylation at Thr-345 by CDK1 and CDK2 promotes maintenance of H3K27me3 levels at EZH2-target loci, thus leading to epigenetic gene silencing. Sumoylated. In terms of processing, glycosylated: O-GlcNAcylation at Ser-75 by OGT increases stability of EZH2 and facilitates the formation of H3K27me3 by the PRC2/EED-EZH2 complex.

It localises to the nucleus. The enzyme catalyses L-lysyl(27)-[histone H3] + 3 S-adenosyl-L-methionine = N(6),N(6),N(6)-trimethyl-L-lysyl(27)-[histone H3] + 3 S-adenosyl-L-homocysteine + 3 H(+). In terms of biological role, polycomb group (PcG) protein. Catalytic subunit of the PRC2/EED-EZH2 complex, which methylates 'Lys-9' (H3K9me) and 'Lys-27' (H3K27me) of histone H3, leading to transcriptional repression of the affected target gene. Able to mono-, di- and trimethylate 'Lys-27' of histone H3 to form H3K27me1, H3K27me2 and H3K27me3, respectively. Displays a preference for substrates with less methylation, loses activity when progressively more methyl groups are incorporated into H3K27, H3K27me0 &gt; H3K27me1 &gt; H3K27me2. Compared to EZH1-containing complexes, it is more abundant in embryonic stem cells and plays a major role in forming H3K27me3, which is required for embryonic stem cell identity and proper differentiation. The PRC2/EED-EZH2 complex may also serve as a recruiting platform for DNA methyltransferases, thereby linking two epigenetic repression systems. EZH2 can also methylate non-histone proteins such as the transcription factor GATA4 and the nuclear receptor RORA. Regulates the circadian clock via histone methylation at the promoter of the circadian genes. Essential for the CRY1/2-mediated repression of the CLOCK-BMAL1 transcriptional activation of PER1/2. Involved in the di and trimethylation of 'Lys-27' of histone H3 on PER1/2 promoters which is necessary for the CRY1/2 proteins to inhibit transcription. In Macaca fascicularis (Crab-eating macaque), this protein is Histone-lysine N-methyltransferase EZH2 (EZH2).